The sequence spans 143 residues: MKHVEIFTDGACKGNPGKGGWGALLRMGEHEKEMAGSEKETTNNRMELMAAIRALEALKQPCRVTLHTDSKYVLDGITKWIFGWQKKGWKTADNKPVKNEDLWRALVDAVRPHKVEWVWVKGHDGHPENERVDKLASDAALAA.

An RNase H type-1 domain is found at 1–141; the sequence is MKHVEIFTDG…VDKLASDAAL (141 aa). Asp9, Glu47, Asp69, and Asp133 together coordinate Mg(2+).

The protein belongs to the RNase H family. As to quaternary structure, monomer. Requires Mg(2+) as cofactor.

It is found in the cytoplasm. It catalyses the reaction Endonucleolytic cleavage to 5'-phosphomonoester.. In terms of biological role, endonuclease that specifically degrades the RNA of RNA-DNA hybrids. The chain is Ribonuclease H from Novosphingobium aromaticivorans (strain ATCC 700278 / DSM 12444 / CCUG 56034 / CIP 105152 / NBRC 16084 / F199).